The chain runs to 983 residues: Serine/threonine-protein kinase N2 (983 aa).

In terms of domain architecture, REM-1 1 spans 33-109 (KLDFSDTMVQ…LQELNAHIVV (77 aa)). Lys77 bears the N6-acetyllysine mark. Residues 107-135 (IVVSDPEDSTDCPRTPDTPNSDSRSSTSN) are disordered. Position 110 is a phosphoserine (Ser110). A phosphothreonine mark is found at Thr121 and Thr124. Residues 121-135 (TPDTPNSDSRSSTSN) show a composition bias toward low complexity. REM-1 domains follow at residues 121–203 (TPDT…TNEL) and 204–284 (AFDN…ELPR). A phosphoserine mark is found at Ser301, Ser305, Ser359, and Ser361. The tract at residues 351 to 382 (TSVALPGWSPSDNRSSFMSRTSKSKSGSSRNL) is disordered. Positions 352 to 472 (SVALPGWSPS…LYLEPQGTLF (121 aa)) constitute a C2 domain. Low complexity predominate over residues 364–380 (RSSFMSRTSKSKSGSSR). Residues 381–462 (NLLKTDDLSN…FLDNQRHGMC (82 aa)) are necessary to rescue apical junction formation. A phosphoserine mark is found at Ser534, Ser582, Ser619, and Ser630. The disordered stretch occupies residues 553-588 (LAPPASDSTVTKLDFDLEPEPPPAPPRASSLGETDE). Positions 656-915 (FRCCAVLGRG…AEDVKKHPFF (260 aa)) constitute a Protein kinase domain. ATP contacts are provided by residues 662–670 (LGRGHFGKV) and Lys685. The active-site Proton acceptor is the Asp781. At Thr815 the chain carries Phosphothreonine; by PDPK1. The tract at residues 916–976 (RLTDWSALMD…EEEQEMFHDF (61 aa)) is necessary for the catalytic activity. One can recognise an AGC-kinase C-terminal domain in the interval 916 to 983 (RLTDWSALMD…HDFDYVADWC (68 aa)). The residue at position 951 (Ser951) is a Phosphoserine. Phosphothreonine is present on Thr957. The segment at 977–983 (DYVADWC) is negatively regulates the responsiveness of the catalytic activity by cardiolipin and is required for optimal activation by the GTP-bound RhoA.

It belongs to the protein kinase superfamily. AGC Ser/Thr protein kinase family. PKC subfamily. In terms of assembly, interacts (via the REM repeats) with RHOA (GTP-bound form preferentially) and interacts (via the REM repeats) with RAC1 (GTP-bound form preferentially); the interactions induce its autophosphorylation. Interacts with NCK1 (via SH3 domains). Interacts with RHOC. Interacts with NCK1 and NCK2. Interacts with CD44. Interacts (via C-terminal kinase domain) with PDPK1; the interaction stimulates PDPK1 kinase activity. Interacts with MAP3K2; the interaction activates PRK2 kinase activity in a MAP3K2-independent kinase activity. Interacts (via C-terminal domain) with AKT1; the interaction occurs with the C-terminal cleavage product of PRK2 in apoptotic cells. Interacts (via C-terminus) with PTPN13 (via PDZ 3 domain). Interacts with CDK10. Phosphorylated during mitosis. Autophosphorylated. Phosphorylated. Phosphorylated by CDK10. Post-translationally, activated by limited proteolysis with trypsin. Proteolytically cleaved by caspase-3 during the induction of apoptotic cell death. In terms of tissue distribution, ubiquitous. Highly expressed in liver and lung Expressed in astrocytes (at protein level). Ubiquitous.

It localises to the cytoplasm. The protein resides in the nucleus. Its subcellular location is the membrane. The protein localises to the cell projection. It is found in the lamellipodium. It localises to the cytoskeleton. The protein resides in the cleavage furrow. Its subcellular location is the midbody. The protein localises to the cell junction. The enzyme catalyses L-seryl-[protein] + ATP = O-phospho-L-seryl-[protein] + ADP + H(+). It catalyses the reaction L-threonyl-[protein] + ATP = O-phospho-L-threonyl-[protein] + ADP + H(+). Its activity is regulated as follows. Kinase activity is activated upon binding to GTP-bound Rho1/Rac1 GTPases. Activated by caspase-3 (CASP3) cleavage during apoptosis. Activated by lipids, particularly cardiolipin and to a lesser extent by other acidic phospholipids and unsaturated fatty acids. Two specific sites, Thr-815 (activation loop of the kinase domain) and Thr-957 (turn motif), need to be phosphorylated for its full activation. In terms of biological role, PKC-related serine/threonine-protein kinase and Rho/Rac effector protein that participates in specific signal transduction responses in the cell. Plays a role in the regulation of cell cycle progression, actin cytoskeleton assembly, cell migration, cell adhesion, tumor cell invasion and transcription activation signaling processes. Phosphorylates CTTN in hyaluronan-induced astrocytes and hence decreases CTTN ability to associate with filamentous actin. Phosphorylates HDAC5, therefore lead to impair HDAC5 import. Direct RhoA target required for the regulation of the maturation of primordial junctions into apical junction formation in bronchial epithelial cells. Required for G2/M phases of the cell cycle progression and abscission during cytokinesis in a ECT2-dependent manner. Stimulates FYN kinase activity that is required for establishment of skin cell-cell adhesion during keratinocytes differentiation. Regulates epithelial bladder cells speed and direction of movement during cell migration and tumor cell invasion. Inhibits Akt pro-survival-induced kinase activity. Mediates Rho protein-induced transcriptional activation via the c-fos serum response factor (SRF). Involved in the negative regulation of ciliogenesis. This chain is Serine/threonine-protein kinase N2 (Pkn2), found in Mus musculus (Mouse).